The chain runs to 170 residues: Flavodoxin (170 aa).

The Flavodoxin-like domain occupies 5–165; the sequence is IGLFYGTQTG…RIKSWVAQLK (161 aa).

The protein belongs to the flavodoxin family. Requires FMN as cofactor.

Its function is as follows. Low-potential electron donor to a number of redox enzymes. The sequence is that of Flavodoxin (isiB) from Nostoc sp. (strain PCC 7120 / SAG 25.82 / UTEX 2576).